The following is a 219-amino-acid chain: Adenylate kinase (219 aa).

G13–T18 lines the ATP pocket. The interval S33–V62 is NMP. AMP-binding positions include T34, R39, N60–V62, G88–R91, and Q95. Residues G129 to D167 are LID. Residue R130 participates in ATP binding. C133 and C136 together coordinate Zn(2+). An ATP-binding site is contributed by T139–Y140. C153 and C156 together coordinate Zn(2+). AMP-binding residues include R164 and R175. R203 serves as a coordination point for ATP.

Belongs to the adenylate kinase family. As to quaternary structure, monomer.

It localises to the cytoplasm. It catalyses the reaction AMP + ATP = 2 ADP. It participates in purine metabolism; AMP biosynthesis via salvage pathway; AMP from ADP: step 1/1. In terms of biological role, catalyzes the reversible transfer of the terminal phosphate group between ATP and AMP. Plays an important role in cellular energy homeostasis and in adenine nucleotide metabolism. This Lactiplantibacillus plantarum (strain ATCC BAA-793 / NCIMB 8826 / WCFS1) (Lactobacillus plantarum) protein is Adenylate kinase.